Here is a 180-residue protein sequence, read N- to C-terminus: Insulin-like growth factor 2 (180 aa).

A signal peptide spans 1-24; that stretch reads MGIPVGKSMLVLLISLAFALCCIA. Residues 25–52 form a b region; it reads AYRPSETLCGGELVDTLQFVCSDRGFYF. Disulfide bonds link Cys-33–Cys-71, Cys-45–Cys-84, and Cys-70–Cys-75. The segment at 53 to 64 is c; that stretch reads SRPSSRANRRSR. Residues 65–85 are a; sequence GIVEECCFRSCDLALLETYCA. Residues 86 to 91 form a d region; it reads TPAKSE. The propeptide at 92-180 is e peptide; the sequence is RDVSTSQAVL…ASSEMSSNHQ (89 aa). Positions 160–180 are disordered; that stretch reads VLPPKDPAHGGASSEMSSNHQ.

This sequence belongs to the insulin family. In terms of assembly, interacts with MYORG; this interaction is required for IGF2 secretion. Interacts with integrins ITGAV:ITGB3 and ITGA6:ITGB4; integrin-binding is required for IGF2 signaling. Interacts with IGFBP2. Proteolytically processed by PCSK4, proIGF2 is cleaved at Arg-128 and Arg-92 to generate big-IGF2 and mature IGF2.

It is found in the secreted. Functionally, the insulin-like growth factors possess growth-promoting activity. Major fetal growth hormone in mammals. Plays a key role in regulating fetoplacental development. IGF2 is influenced by placental lactogen. Also involved in tissue differentiation. In adults, involved in glucose metabolism in adipose tissue, skeletal muscle and liver. Acts as a ligand for integrin which is required for IGF2 signaling. Positively regulates myogenic transcription factor MYOD1 function by facilitating the recruitment of transcriptional coactivators, thereby controlling muscle terminal differentiation. Inhibits myoblast differentiation and modulates metabolism via increasing the mitochondrial respiration rate. Preptin undergoes glucose-mediated co-secretion with insulin, and acts as a physiological amplifier of glucose-mediated insulin secretion. Exhibits osteogenic properties by increasing osteoblast mitogenic activity through phosphoactivation of MAPK1 and MAPK3. This chain is Insulin-like growth factor 2, found in Rattus norvegicus (Rat).